The sequence spans 73 residues: Gas vesicle protein A (73 aa).

Belongs to the gas vesicle GvpA family. In terms of assembly, the gas vesicle shell is 2 nm thick and consists of a single layer of this protein. It forms helical ribs nearly perpendicular to the long axis of the vesicle.

It is found in the gas vesicle shell. Gas vesicles are hollow, gas filled proteinaceous nanostructures found in some microorganisms. During planktonic growth they allow positioning of the organism at a favorable depth for light or nutrient acquisition. GvpA forms the protein shell. The chain is Gas vesicle protein A from Nostoc punctiforme (strain ATCC 29133 / PCC 73102).